Consider the following 454-residue polypeptide: Argininosuccinate synthase (454 aa).

ATP-binding positions include 17–25 (AFSGGLDTS) and alanine 43. L-citrulline is bound at residue tyrosine 99. Residues glycine 129 and threonine 131 each contribute to the ATP site. 3 residues coordinate L-aspartate: threonine 131, asparagine 135, and aspartate 136. Asparagine 135 serves as a coordination point for L-citrulline. Aspartate 136 is a binding site for ATP. Residues arginine 139 and serine 192 each contribute to the L-citrulline site. Aspartate 194 provides a ligand contact to ATP. Positions 201, 203, and 280 each coordinate L-citrulline.

Belongs to the argininosuccinate synthase family. Type 2 subfamily. As to quaternary structure, homotetramer.

It localises to the cytoplasm. The enzyme catalyses L-citrulline + L-aspartate + ATP = 2-(N(omega)-L-arginino)succinate + AMP + diphosphate + H(+). The protein operates within amino-acid biosynthesis; L-arginine biosynthesis; L-arginine from L-ornithine and carbamoyl phosphate: step 2/3. The chain is Argininosuccinate synthase from Yersinia enterocolitica serotype O:8 / biotype 1B (strain NCTC 13174 / 8081).